The sequence spans 84 residues: FMRFamide-like neuropeptides 26 (84 aa).

The N-terminal stretch at 1 to 19 is a signal peptide; sequence MKVMFMLALLFSSLVATSA. Residues 20–48 constitute a propeptide that is removed on maturation; sequence FRLPFQFFGANEDFNSGLTKRNYYESKPY. A phenylalanine amide mark is found at Phe-61 and Phe-82.

It belongs to the FARP (FMRFamide related peptide) family. In terms of tissue distribution, each flp gene is expressed in a distinct set of neurons.

The protein localises to the secreted. Its function is as follows. FMRFamides and FMRFamide-like peptides are neuropeptides. The chain is FMRFamide-like neuropeptides 26 from Caenorhabditis elegans.